The chain runs to 112 residues: MPMTTTSTFETHIIEAYRGPVFGETIYGANVLRDISAVFTDVVGGRAGDYEKVLIRGRNAALAEMSERAKQLGANAVIGIRFDYSTVGRSMLMICSSGTAVIANPRIPDASH.

It belongs to the UPF0145 family.

The chain is UPF0145 protein RB3016 from Rhodopirellula baltica (strain DSM 10527 / NCIMB 13988 / SH1).